Here is a 506-residue protein sequence, read N- to C-terminus: ATP synthase subunit alpha, mitochondrial (506 aa).

An ATP-binding site is contributed by 171–178; it reads GDRQTGKT.

This sequence belongs to the ATPase alpha/beta chains family. In terms of assembly, F-type ATPases have 2 components, CF(1) - the catalytic core - and CF(0) - the membrane proton channel. CF(1) has five subunits: alpha(3), beta(3), gamma(1), delta(1), epsilon(1). CF(0) has three main subunits: a, b and c.

The protein resides in the mitochondrion. It localises to the mitochondrion inner membrane. Mitochondrial membrane ATP synthase (F(1)F(0) ATP synthase or Complex V) produces ATP from ADP in the presence of a proton gradient across the membrane which is generated by electron transport complexes of the respiratory chain. F-type ATPases consist of two structural domains, F(1) - containing the extramembraneous catalytic core, and F(0) - containing the membrane proton channel, linked together by a central stalk and a peripheral stalk. During catalysis, ATP synthesis in the catalytic domain of F(1) is coupled via a rotary mechanism of the central stalk subunits to proton translocation. Subunits alpha and beta form the catalytic core in F(1). Rotation of the central stalk against the surrounding alpha(3)beta(3) subunits leads to hydrolysis of ATP in three separate catalytic sites on the beta subunits. Subunit alpha does not bear the catalytic high-affinity ATP-binding sites. The chain is ATP synthase subunit alpha, mitochondrial (ATPA) from Beta vulgaris (Sugar beet).